The primary structure comprises 359 residues: Tropomodulin-1 (359 aa).

A disordered region spans residues 36-61; that stretch reads ELDPDNALLPAGLRQKDQTTKAPTGP. The tract at residues 39-138 is tropomyosin-binding; sequence PDNALLPAGL…CDIAAILGMH (100 aa).

It belongs to the tropomodulin family. In terms of assembly, binds to the N-terminus of tropomyosin and to actin. Interacts with FLII. As to expression, highly expressed in the erythrocyte, heart and skeletal muscle.

Its subcellular location is the cytoplasm. It is found in the cytoskeleton. Blocks the elongation and depolymerization of the actin filaments at the pointed end. The Tmod/TM complex contributes to the formation of the short actin protofilament, which in turn defines the geometry of the membrane skeleton. The sequence is that of Tropomodulin-1 (Tmod1) from Mus musculus (Mouse).